A 208-amino-acid polypeptide reads, in one-letter code: Phosphoribosyl-dephospho-CoA transferase (208 aa).

Active-site residues include Asp133 and Asp135.

It belongs to the MdcG family.

The catalysed reaction is apo-[malonate decarboxylase ACP] + 2'-(5''-triphospho-alpha-D-ribosyl)-3'-dephospho-CoA = holo-[malonate decarboxylase ACP] + diphosphate. Transfers 2'-(5-triphosphoribosyl)-3'-dephosphocoenzyme-A to the apo-[acyl-carrier-protein] of the malonate decarboxylase to yield holo-[acyl-carrier-protein]. The chain is Phosphoribosyl-dephospho-CoA transferase from Pseudomonas fluorescens (strain ATCC BAA-477 / NRRL B-23932 / Pf-5).